Consider the following 305-residue polypeptide: Acyl transferase (305 aa).

Catalysis depends on charge relay system residues S116, D213, and H243.

It belongs to the LuxD family.

Its pathway is lipid metabolism; fatty acid reduction for biolumincescence. In terms of biological role, acyl transferase is part of the fatty acid reductase system required for aldehyde biosynthesis; it produces fatty acids for the luminescent reaction. The protein is Acyl transferase of Shewanella woodyi (strain ATCC 51908 / MS32).